The sequence spans 331 residues: Probable protein phosphatase 2C 1 (331 aa).

A disordered region spans residues 1–29; that stretch reads MAASSTATRLSPPRLHAPTTPSPHLPLRR. A PPM-type phosphatase domain is found at 48-292; it reads THLIPHPRKA…DDITVIVAQV (245 aa). Mn(2+) is bound by residues Asp79, Gly80, Asp210, and Asp283. Residues 300-331 form a disordered region; it reads DEGVDEEKGQGDEQGSAVAVASSEQKEDSITT.

This sequence belongs to the PP2C family. Requires Mg(2+) as cofactor. It depends on Mn(2+) as a cofactor.

The catalysed reaction is O-phospho-L-seryl-[protein] + H2O = L-seryl-[protein] + phosphate. It carries out the reaction O-phospho-L-threonyl-[protein] + H2O = L-threonyl-[protein] + phosphate. This is Probable protein phosphatase 2C 1 from Oryza sativa subsp. japonica (Rice).